The following is a 576-amino-acid chain: Arginine--tRNA ligase (576 aa).

The 'HIGH' region motif lies at 132 to 142 (ANPTGPMHIGH).

Belongs to the class-I aminoacyl-tRNA synthetase family. Monomer.

It is found in the cytoplasm. It catalyses the reaction tRNA(Arg) + L-arginine + ATP = L-arginyl-tRNA(Arg) + AMP + diphosphate. This Ehrlichia ruminantium (strain Welgevonden) protein is Arginine--tRNA ligase.